Consider the following 474-residue polypeptide: UDP glycosyltransferase 9 (474 aa).

Residues S296, W349–C350, H367–E375, and W389–Q392 contribute to the UDP-alpha-D-glucose site.

Belongs to the UDP-glycosyltransferase family.

In Catharanthus roseus (Madagascar periwinkle), this protein is UDP glycosyltransferase 9.